The primary structure comprises 151 residues: Ribosome maturation factor RimP (151 aa).

The protein belongs to the RimP family.

It is found in the cytoplasm. Functionally, required for maturation of 30S ribosomal subunits. The protein is Ribosome maturation factor RimP of Shewanella frigidimarina (strain NCIMB 400).